The following is a 220-amino-acid chain: Ribose-5-phosphate isomerase A (220 aa).

Substrate-binding positions include 28-31 (TGST), 81-84 (DGAD), and 94-97 (KGGG). Glutamate 103 functions as the Proton acceptor in the catalytic mechanism. Residue lysine 121 coordinates substrate.

The protein belongs to the ribose 5-phosphate isomerase family. Homodimer.

It catalyses the reaction aldehydo-D-ribose 5-phosphate = D-ribulose 5-phosphate. It functions in the pathway carbohydrate degradation; pentose phosphate pathway; D-ribose 5-phosphate from D-ribulose 5-phosphate (non-oxidative stage): step 1/1. Functionally, catalyzes the reversible conversion of ribose-5-phosphate to ribulose 5-phosphate. The polypeptide is Ribose-5-phosphate isomerase A (Hydrogenovibrio crunogenus (strain DSM 25203 / XCL-2) (Thiomicrospira crunogena)).